The following is a 207-amino-acid chain: Ribosomal RNA small subunit methyltransferase G (207 aa).

Residues Gly-73, Leu-78, 124 to 125 (VE), and Arg-139 contribute to the S-adenosyl-L-methionine site.

The protein belongs to the methyltransferase superfamily. RNA methyltransferase RsmG family.

The protein localises to the cytoplasm. The catalysed reaction is guanosine(527) in 16S rRNA + S-adenosyl-L-methionine = N(7)-methylguanosine(527) in 16S rRNA + S-adenosyl-L-homocysteine. Its function is as follows. Specifically methylates the N7 position of guanine in position 527 of 16S rRNA. This Shigella flexneri protein is Ribosomal RNA small subunit methyltransferase G.